Consider the following 242-residue polypeptide: HTH-type transcriptional regulator GadW (242 aa).

The region spanning 139–236 (GKVERLISFD…GVTPHQFAQH (98 aa)) is the HTH araC/xylS-type domain. 2 consecutive DNA-binding regions (H-T-H motif) follow at residues 156–177 (RDIAERMYTSESLIKKKLQDEN) and 203–226 (LHTIAEKCGYSSTSYFINTFRQYY).

As to quaternary structure, homodimer.

In terms of biological role, depending on the conditions (growth phase and medium), acts as a positive or negative regulator of gadA and gadBC. Repression occurs directly or via the repression of the expression of gadX. Activation occurs directly by the binding of GadW to the gadA and gadBC promoters. The polypeptide is HTH-type transcriptional regulator GadW (gadW) (Escherichia coli (strain K12)).